The chain runs to 258 residues: MILVLDVGNTNIVLGIYKNKELIANWRLATDNKRTADEYGIQVIELFSHNNLSFSDIEGVIISSVVPNIMYSLEHMISKYFNIKPIIVGPGVKTGINIKYDNPKEVGADRIVNAVAAHEIYKKPLIIIDFGTATTFCAVTKEANYLGGTICPGIKISSDALFDKAAKLPRVELVKTPGVICKNTVASIQSGIIYGYAGQVDYIVSKMKKEMMDLGEEEPFVVATGGFAKLISEESKSIDEINAILTLEGLRVIYEKNK.

Asp6–Val13 provides a ligand contact to ATP. Substrate contacts are provided by residues Tyr100 and Gly107–Arg110. Asp109 acts as the Proton acceptor in catalysis. Position 129 (Asp129) interacts with K(+). Position 132 (Thr132) interacts with ATP. Thr184 contacts substrate.

This sequence belongs to the type III pantothenate kinase family. In terms of assembly, homodimer. It depends on NH4(+) as a cofactor. Requires K(+) as cofactor.

The protein localises to the cytoplasm. The enzyme catalyses (R)-pantothenate + ATP = (R)-4'-phosphopantothenate + ADP + H(+). Its pathway is cofactor biosynthesis; coenzyme A biosynthesis; CoA from (R)-pantothenate: step 1/5. Functionally, catalyzes the phosphorylation of pantothenate (Pan), the first step in CoA biosynthesis. This chain is Type III pantothenate kinase, found in Clostridium botulinum (strain Kyoto / Type A2).